Here is a 294-residue protein sequence, read N- to C-terminus: 4-diphosphocytidyl-2-C-methyl-D-erythritol kinase (294 aa).

Lysine 23 is a catalytic residue. 106-116 (PMGGGLGGGSS) contributes to the ATP binding site. Aspartate 148 is a catalytic residue.

Belongs to the GHMP kinase family. IspE subfamily.

The catalysed reaction is 4-CDP-2-C-methyl-D-erythritol + ATP = 4-CDP-2-C-methyl-D-erythritol 2-phosphate + ADP + H(+). The protein operates within isoprenoid biosynthesis; isopentenyl diphosphate biosynthesis via DXP pathway; isopentenyl diphosphate from 1-deoxy-D-xylulose 5-phosphate: step 3/6. Its function is as follows. Catalyzes the phosphorylation of the position 2 hydroxy group of 4-diphosphocytidyl-2C-methyl-D-erythritol. The polypeptide is 4-diphosphocytidyl-2-C-methyl-D-erythritol kinase (Nitrosospira multiformis (strain ATCC 25196 / NCIMB 11849 / C 71)).